A 348-amino-acid chain; its full sequence is (+)-germacrene D synthase (348 aa).

Residues Asp-97, Asp-101, Asn-242, and Ser-246 each contribute to the Mg(2+) site. A DDXXD motif motif is present at residues 97 to 101 (DDILD).

It belongs to the terpene synthase family. Mg(2+) serves as cofactor.

It carries out the reaction (2E,6E)-farnesyl diphosphate = (+)-germacrene D + diphosphate. The protein operates within secondary metabolite biosynthesis; terpenoid biosynthesis. Sesquiterpene synthase converting farnesyl diphosphate to eight sesquiterpenes, with (+)-germacrene D and an unidentified oxygenated sesquiterpene as the major products. Has no diterpene synthase activity. The polypeptide is (+)-germacrene D synthase (Selaginella moellendorffii (Spikemoss)).